The primary structure comprises 420 residues: POU domain, class 4, transcription factor 1 (420 aa).

A POU-IV box motif is present at residues 57–66; the sequence is RAEALAAVDI. 2 disordered regions span residues 94–117 and 132–200; these read STVP…GDLL and GGAG…XGHL. The span at 99-108 shows a compositional bias: basic residues; the sequence is AHHHHHHHHH. 2 stretches are compositionally biased toward gly residues: residues 132-165 and 172-184; these read GGAG…GPGV and PGGG…GGLL. The POU-specific domain occupies 261 to 338; sequence DSDTDPRELE…ILQAWLEEAE (78 aa). Positions 356-415 form a DNA-binding region, homeobox; it reads KKRKRTSIAAPEKRSLEAYFAVQPRPSSEKIAAIAEKLDLKKNVVRVWFCNQRQKQKRMK.

It belongs to the POU transcription factor family. Class-4 subfamily. In terms of assembly, interacts (via N-terminus) with RIT2; the interaction controls POU4F1 transactivation activity on some neuronal target genes. Isoform 1 interacts with POU4F2; this interaction inhibits both POU4F1 DNA-binding and transcriptional activities. Isoform 1 interacts (C-terminus) with ESR1 (via DNA-binding domain); this interaction decreases the estrogen receptor ESR1 transcriptional activity in a DNA- and ligand 17-beta-estradiol-independent manner. Detected in brain, spinal cord and dorsal root ganglion. Isoform 2 is detected in brain, spinal cord, dorsal root ganglion and spleen.

Its subcellular location is the nucleus. The protein resides in the cytoplasm. Its function is as follows. Multifunctional transcription factor with different regions mediating its different effects. Acts by binding (via its C-terminal domain) to sequences related to the consensus octamer motif 5'-ATGCAAAT-3' in the regulatory regions of its target genes. Regulates the expression of specific genes involved in differentiation and survival within a subset of neuronal lineages. It has been shown that activation of some of these genes requires its N-terminal domain, maybe through a neuronal-specific cofactor. Activates BCL2 expression and protects neuronal cells from apoptosis (via the N-terminal domain). Induces neuronal process outgrowth and the coordinate expression of genes encoding synaptic proteins. Exerts its major developmental effects in somatosensory neurons and in brainstem nuclei involved in motor control. Stimulates the binding affinity of the nuclear estrogene receptor ESR1 to DNA estrogen response element (ERE), and hence modulates ESR1-induced transcriptional activity. May positively regulate POU4F2 and POU4F3. Regulates dorsal root ganglion sensory neuron specification and axonal projection into the spinal cord. Plays a role in TNFSF11-mediated terminal osteoclast differentiation. Negatively regulates its own expression interacting directly with a highly conserved autoregulatory domain surrounding the transcription initiation site. In terms of biological role, able to act as transcription factor, cannot regulate the expression of the same subset of genes than isoform 1. Does not have anitapoptotic effect on neuronal cells. The protein is POU domain, class 4, transcription factor 1 (Pou4f1) of Rattus norvegicus (Rat).